Consider the following 874-residue polypeptide: DNA mismatch repair protein MutS (874 aa).

The segment covering 1–12 (MSNDRPLTHSEA) has biased composition (basic and acidic residues). Positions 1 to 20 (MSNDRPLTHSEAESSALRLG) are disordered. ATP is bound at residue 661–668 (GPNASGKS). A disordered region spans residues 854 to 874 (RKSSMGDPPTAPEINQGELPF).

It belongs to the DNA mismatch repair MutS family.

In terms of biological role, this protein is involved in the repair of mismatches in DNA. It is possible that it carries out the mismatch recognition step. This protein has a weak ATPase activity. This chain is DNA mismatch repair protein MutS, found in Thermosynechococcus vestitus (strain NIES-2133 / IAM M-273 / BP-1).